The sequence spans 487 residues: L-tartrate/succinate antiporter (487 aa).

14 consecutive transmembrane segments (helical) span residues 10–30 (YLAP…AGLE), 33–53 (TWLY…EPVP), 54–74 (GAVV…WLLF), 93–113 (WAVS…FMFG), 137–157 (TLFL…VTPS), 189–209 (IGSY…AIFL), 236–256 (FLGM…LAYV), 292–312 (LMVG…AAMV), 313–333 (GYSV…DIVS), 340–360 (VFFW…TGFI), 370–390 (SLSG…FYLL), 393–413 (FFAS…AAAL), 418–438 (IPLP…SILT), and 465–485 (IFGL…MPVV).

Belongs to the SLC13A/DASS transporter (TC 2.A.47) family. DIT1 subfamily.

It localises to the cell inner membrane. It carries out the reaction (2R,3R)-tartrate(out) + succinate(in) = (2R,3R)-tartrate(in) + succinate(out). Its function is as follows. Catalyzes the uptake of tartrate in exchange for intracellular succinate. Essential for anaerobic L-tartrate fermentation. This chain is L-tartrate/succinate antiporter (ttdT), found in Escherichia coli O157:H7.